The primary structure comprises 33 residues: pyr operon leader peptide (33 aa).

In Salmonella typhi, this protein is pyr operon leader peptide (pyrL).